The primary structure comprises 316 residues: Pantothenate kinase (316 aa).

An ATP-binding site is contributed by 95-102 (GSVAVGKS).

The protein belongs to the prokaryotic pantothenate kinase family.

Its subcellular location is the cytoplasm. The enzyme catalyses (R)-pantothenate + ATP = (R)-4'-phosphopantothenate + ADP + H(+). The protein operates within cofactor biosynthesis; coenzyme A biosynthesis; CoA from (R)-pantothenate: step 1/5. The chain is Pantothenate kinase from Sodalis glossinidius (strain morsitans).